A 393-amino-acid polypeptide reads, in one-letter code: MNKKAYFGEFGGSFVSELLVPALRELEQAFDACLKDEKFQKEYFRLLKDFVGRPSPLTLCQNIVSNPKVKLYLKREDLIHGGAHKTNQALGQALLAKKMGKTRIIAETGAGQHGVATAIACALLNLKCVVFMGSKDIKRQEMNVFRMHLLGAEVREVNSGSATLKDAVNEALRDWASSYKDTHYLLGTAAGPHPYPTMVKTFQKMIGDEVKSQILEKENRLPDYVIACVGGGSNAIGIFSAFLNDKEVKLIGVEPAGLGLETNKHGATLNKGRVGILHGNKTYLLQDDEGQIAESHSISAGLDYPGVGPEHSYLKESGRAVYESASDAEALEAFKLLCQKEGIIPALESSHALAYALKLAQKCEEESIIVVNLSGRGDKDLSTVYNALKGGLK.

Lysine 85 carries the post-translational modification N6-(pyridoxal phosphate)lysine.

This sequence belongs to the TrpB family. In terms of assembly, tetramer of two alpha and two beta chains. The cofactor is pyridoxal 5'-phosphate.

The catalysed reaction is (1S,2R)-1-C-(indol-3-yl)glycerol 3-phosphate + L-serine = D-glyceraldehyde 3-phosphate + L-tryptophan + H2O. The protein operates within amino-acid biosynthesis; L-tryptophan biosynthesis; L-tryptophan from chorismate: step 5/5. Functionally, the beta subunit is responsible for the synthesis of L-tryptophan from indole and L-serine. In Helicobacter pylori (strain ATCC 700392 / 26695) (Campylobacter pylori), this protein is Tryptophan synthase beta chain (trpB).